A 351-amino-acid chain; its full sequence is Heme A synthase (351 aa).

A run of 8 helical transmembrane segments spans residues 17–37, 103–123, 129–149, 164–184, 201–221, 261–281, 289–309, and 316–336; these read WLILMALMVYAIILVGGATRL, LIGLVAVAGFAFFAWRRWLGQ, LVGLIALGGLQGAIGWWMVSS, LMTHFTLALLILAVIAWLWLD, AMALMGLIFVQMAAGALVAGL, FNHRLLAYGLWAGSLAAAWAF, EFAFLAVLVSAQAVWGILTLV, and LALVHQGLGVVTTLWAVYTVW. Histidine 263 contributes to the heme binding site. Histidine 320 contacts heme.

It belongs to the COX15/CtaA family. Type 2 subfamily. Interacts with CtaB. Heme b serves as cofactor.

Its subcellular location is the cell membrane. It carries out the reaction Fe(II)-heme o + 2 A + H2O = Fe(II)-heme a + 2 AH2. The protein operates within porphyrin-containing compound metabolism; heme A biosynthesis; heme A from heme O: step 1/1. Its function is as follows. Catalyzes the conversion of heme O to heme A by two successive hydroxylations of the methyl group at C8. The first hydroxylation forms heme I, the second hydroxylation results in an unstable dihydroxymethyl group, which spontaneously dehydrates, resulting in the formyl group of heme A. This is Heme A synthase from Hyphomonas neptunium (strain ATCC 15444).